The sequence spans 417 residues: SNF1 protein kinase subunit beta-3 (417 aa).

A compositionally biased stretch (basic and acidic residues) spans 1–12; that stretch reads MAGDNPENKDAS. A disordered region spans residues 1-37; that stretch reads MAGDNPENKDASMLDVSDAASNTTINGKHSADSTNEA. Phosphoserine occurs at positions 12, 21, 44, and 135. Residues 19 to 37 are compositionally biased toward polar residues; sequence AASNTTINGKHSADSTNEA. Disordered stretches follow at residues 64 to 155 and 250 to 269; these read SSLI…VEGK and GNEP…DDSK. Over residues 118-136 the composition is skewed to polar residues; the sequence is TGNTLQKMDYQPSQQPDSL. The span at 137 to 149 shows a compositional bias: low complexity; that stretch reads QNQGFQQQQEQQQ. Positions 152 to 342 are kinase-interacting sequence (KIS); required for interaction with SNF1; that stretch reads VEGKKGRAMM…DQQQNNHQNM (191 aa). Basic and acidic residues predominate over residues 257 to 269; the sequence is LAEKKANHVDDSK. 2 positions are modified to phosphoserine: Ser-276 and Ser-279. The association with SNF1 kinase complex (ASC) domain; required for interaction with SNF4 stretch occupies residues 343–417; the sequence is AWLTPPQLPP…VTQILYTPLQ (75 aa).

Belongs to the 5'-AMP-activated protein kinase beta subunit family. Component of the SNF1 kinase complex, a heterotrimeric complex composed of the catalytic alpha subunit SNF1, one of the three related beta subunits SIP1, SIP2 or GAL83, and the regulatory gamma subunit SNF4. The beta subunit serves as a bridge between the catalytic and the regulatory subunit. Interacts (via KIS domain) with SNF1. Interacts (via ASC domain) with SNF4. Interacts with REE1. In terms of processing, phosphorylated by SNF1 in vitro.

It is found in the cytoplasm. Its subcellular location is the nucleus. Functionally, beta subunit of the SNF1 kinase complex, which is required for transcriptional, metabolic, and developmental adaptations in response to glucose limitation. Has a structural role, mediating heterotrimer formation, and a regulatory role, defining carbon source-regulated subcellular location and substrate specificity of the SNF1 kinase complex. Promotes the relocalization of the SNF1 kinase complex to the nucleus upon shift to nonfermentable carbon sources. This chain is SNF1 protein kinase subunit beta-3 (GAL83), found in Saccharomyces cerevisiae (strain ATCC 204508 / S288c) (Baker's yeast).